Consider the following 218-residue polypeptide: MTNKTLDLSVYFIAGAQNFSECSLDGATQKIALIIKSGVTVYQFRDKGTIYKEQKQRLSIAQKLQKVSEEAGVSFIVNDDVELARELNADGIHIGQTDESVSKVREKVGQEMWLGLSVTKADELKTAQSSGADYLGIGPIYPTNSKNDAAKPIGIKDLRLMLLENQLPIVGIGGITQDSLTELSAIGLDGLAVISLLTEAENPKKVAQMIRQKITKNG.

Residues Gln-43–Lys-47 and Asn-78 each bind 4-amino-2-methyl-5-(diphosphooxymethyl)pyrimidine. Residues Asp-79 and Asp-98 each coordinate Mg(2+). Ser-117 is a binding site for 4-amino-2-methyl-5-(diphosphooxymethyl)pyrimidine. Position 143 to 145 (Thr-143 to Ser-145) interacts with 2-[(2R,5Z)-2-carboxy-4-methylthiazol-5(2H)-ylidene]ethyl phosphate. Residue Lys-146 coordinates 4-amino-2-methyl-5-(diphosphooxymethyl)pyrimidine. 2-[(2R,5Z)-2-carboxy-4-methylthiazol-5(2H)-ylidene]ethyl phosphate is bound by residues Gly-174 and Ile-194 to Ser-195.

Belongs to the thiamine-phosphate synthase family. The cofactor is Mg(2+).

The enzyme catalyses 2-[(2R,5Z)-2-carboxy-4-methylthiazol-5(2H)-ylidene]ethyl phosphate + 4-amino-2-methyl-5-(diphosphooxymethyl)pyrimidine + 2 H(+) = thiamine phosphate + CO2 + diphosphate. It carries out the reaction 2-(2-carboxy-4-methylthiazol-5-yl)ethyl phosphate + 4-amino-2-methyl-5-(diphosphooxymethyl)pyrimidine + 2 H(+) = thiamine phosphate + CO2 + diphosphate. It catalyses the reaction 4-methyl-5-(2-phosphooxyethyl)-thiazole + 4-amino-2-methyl-5-(diphosphooxymethyl)pyrimidine + H(+) = thiamine phosphate + diphosphate. The protein operates within cofactor biosynthesis; thiamine diphosphate biosynthesis; thiamine phosphate from 4-amino-2-methyl-5-diphosphomethylpyrimidine and 4-methyl-5-(2-phosphoethyl)-thiazole: step 1/1. In terms of biological role, condenses 4-methyl-5-(beta-hydroxyethyl)thiazole monophosphate (THZ-P) and 2-methyl-4-amino-5-hydroxymethyl pyrimidine pyrophosphate (HMP-PP) to form thiamine monophosphate (TMP). The polypeptide is Thiamine-phosphate synthase (Lactococcus lactis subsp. cremoris (strain SK11)).